A 465-amino-acid chain; its full sequence is Adenosylhomocysteinase (465 aa).

Substrate contacts are provided by threonine 56, aspartate 131, and glutamate 191. 192–194 (TTT) serves as a coordination point for NAD(+). Positions 221 and 225 each coordinate substrate. NAD(+) is bound by residues asparagine 226, 255–260 (GYGDVG), glutamate 278, asparagine 313, 334–336 (IGH), and asparagine 379.

It belongs to the adenosylhomocysteinase family. It depends on NAD(+) as a cofactor.

The protein resides in the cytoplasm. The catalysed reaction is S-adenosyl-L-homocysteine + H2O = L-homocysteine + adenosine. Its pathway is amino-acid biosynthesis; L-homocysteine biosynthesis; L-homocysteine from S-adenosyl-L-homocysteine: step 1/1. Functionally, may play a key role in the regulation of the intracellular concentration of adenosylhomocysteine. This chain is Adenosylhomocysteinase, found in Chelativorans sp. (strain BNC1).